The primary structure comprises 955 residues: Protein translocase subunit SecA (955 aa).

ATP contacts are provided by residues Q87, 105-109, and D494; that span reads GEGKT. Positions 861–955 are disordered; sequence ASPAPAAPRP…KKAPRTKRKR (95 aa). The span at 874-888 shows a compositional bias: low complexity; the sequence is QEAAQQAQGTAAPSA. Over residues 943–955 the composition is skewed to basic residues; it reads SKGKKAPRTKRKR.

Belongs to the SecA family. In terms of assembly, monomer and homodimer. Part of the essential Sec protein translocation apparatus which comprises SecA, SecYEG and auxiliary proteins SecDF. Other proteins may also be involved.

Its subcellular location is the cell membrane. It is found in the cytoplasm. It carries out the reaction ATP + H2O + cellular proteinSide 1 = ADP + phosphate + cellular proteinSide 2.. In terms of biological role, part of the Sec protein translocase complex. Interacts with the SecYEG preprotein conducting channel. Has a central role in coupling the hydrolysis of ATP to the transfer of proteins into and across the cell membrane, serving as an ATP-driven molecular motor driving the stepwise translocation of polypeptide chains across the membrane. The sequence is that of Protein translocase subunit SecA from Rhodococcus jostii (strain RHA1).